A 477-amino-acid polypeptide reads, in one-letter code: Cysteine--tRNA ligase (477 aa).

A Zn(2+)-binding site is contributed by Cys29. A 'HIGH' region motif is present at residues 31–41; that stretch reads PTVYDYPHLGH. Zn(2+)-binding residues include Cys209, His234, and Glu238. Residues 266-270 carry the 'KMSKS' region motif; that stretch reads KMSKS. Lys269 serves as a coordination point for ATP.

This sequence belongs to the class-I aminoacyl-tRNA synthetase family. It depends on Zn(2+) as a cofactor.

The protein resides in the cytoplasm. The enzyme catalyses tRNA(Cys) + L-cysteine + ATP = L-cysteinyl-tRNA(Cys) + AMP + diphosphate. This chain is Cysteine--tRNA ligase (cysS), found in Pyrococcus abyssi (strain GE5 / Orsay).